Consider the following 144-residue polypeptide: Large ribosomal subunit protein uL15 (144 aa).

The disordered stretch occupies residues 1–53 (MRLNTLSPAEGAKHNAKRLGRGIGSGLGKTSGRGHKGQKARTGGGVRRGFEGG). The segment covering 21–31 (RGIGSGLGKTS) has biased composition (gly residues).

This sequence belongs to the universal ribosomal protein uL15 family. Part of the 50S ribosomal subunit.

Its function is as follows. Binds to the 23S rRNA. In Histophilus somni (strain 129Pt) (Haemophilus somnus), this protein is Large ribosomal subunit protein uL15.